We begin with the raw amino-acid sequence, 304 residues long: Murein tetrapeptide carboxypeptidase (304 aa).

Residue Ser-106 is the Nucleophile of the active site. Catalysis depends on charge relay system residues Glu-200 and His-270.

The protein belongs to the peptidase S66 family.

Its subcellular location is the cytoplasm. The catalysed reaction is N-acetyl-D-glucosaminyl-N-acetylmuramoyl-L-alanyl-meso-2,6-diaminoheptanedioyl-D-alanine + H2O = N-acetyl-D-glucosaminyl-N-acetylmuramoyl-L-alanyl-meso-2,6-diaminoheptanedioate + D-alanine. It participates in cell wall biogenesis; peptidoglycan recycling. Functionally, releases the terminal D-alanine residue from the cytoplasmic tetrapeptide recycling product L-Ala-gamma-D-Glu-meso-Dap-D-Ala. Can also cleave D-Ala from murein derivatives containing the tetrapeptide, i.e. MurNAc-tetrapeptide, UDP-MurNAc-tetrapeptide, GlcNAc-MurNAc-tetrapeptide, and GlcNAc-anhMurNAc-tetrapeptide. Does not act on murein sacculi or cross-linked muropeptides. The tripeptides produced by the LcdA reaction can then be reused as peptidoglycan building blocks; LcdA is thereby involved in murein recycling. This Escherichia coli O6:H1 (strain CFT073 / ATCC 700928 / UPEC) protein is Murein tetrapeptide carboxypeptidase (ldcA).